Here is a 76-residue protein sequence, read N- to C-terminus: Antimicrobial peptide Smp24 (76 aa).

An N-terminal signal peptide occupies residues 1–22 (MQYKTFLVIFMAYLLVTHEAEA). A propeptide spanning residues 47–76 (SKRKRDVEDFFDPYQRDLDLELERLLSQLQ) is cleaved from the precursor.

The protein belongs to the non-disulfide-bridged peptide (NDBP) superfamily. Medium-length antimicrobial peptide (group 3) family. Expressed by the venom gland.

The protein resides in the secreted. It localises to the target cell membrane. Functionally, peptide that shows antimicrobial activity, moderate cytolysis on eukaryote cells and interference with DNA synthesis. Has potent activity against Gram-positive bacteria and moderate activity against Gram-negative bacteria, as well as moderate activity against fungi. Acts by inducing bacterial membrane disruption. Uses multiple modes of action depending on the membrane lipid composition. Uses a toroidal pore mechanism against the prokaryotic like membrane and forms hexagonal phase non-lamellar structures in eukaryotic-like membrane. Shows activity against B.subtilis (MIC=4 ug/ml), S.epidermidis (MIC=8 ug/ml), S.aureus (MIC=8 ug/ml), E.coli (MIC=64 ug/ml), K.pneumoniae (MIC=128 ug/ml), P.aeruginosa (MIC=256 ug/ml), and C.albicans (MIC=32 ug/ml). Shows moderate hemolysis activity. The protein is Antimicrobial peptide Smp24 of Scorpio palmatus (Israeli golden scorpion).